Reading from the N-terminus, the 162-residue chain is NADH-quinone oxidoreductase subunit I (162 aa).

2 consecutive 4Fe-4S ferredoxin-type domains span residues 52-82 (LRRY…IEAG) and 93-122 (TRYD…EGPN). Residues cysteine 62, cysteine 65, cysteine 68, cysteine 72, cysteine 102, cysteine 105, cysteine 108, and cysteine 112 each contribute to the [4Fe-4S] cluster site.

The protein belongs to the complex I 23 kDa subunit family. NDH-1 is composed of 14 different subunits. Subunits NuoA, H, J, K, L, M, N constitute the membrane sector of the complex. Requires [4Fe-4S] cluster as cofactor.

The protein localises to the cell inner membrane. The enzyme catalyses a quinone + NADH + 5 H(+)(in) = a quinol + NAD(+) + 4 H(+)(out). Functionally, NDH-1 shuttles electrons from NADH, via FMN and iron-sulfur (Fe-S) centers, to quinones in the respiratory chain. The immediate electron acceptor for the enzyme in this species is believed to be ubiquinone. Couples the redox reaction to proton translocation (for every two electrons transferred, four hydrogen ions are translocated across the cytoplasmic membrane), and thus conserves the redox energy in a proton gradient. The protein is NADH-quinone oxidoreductase subunit I of Beijerinckia indica subsp. indica (strain ATCC 9039 / DSM 1715 / NCIMB 8712).